The chain runs to 373 residues: Enoyl-[acyl-carrier-protein] reductase, mitochondrial (373 aa).

The transit peptide at 1-53 (MWVCSTLWRVRTPARQWRGLLPASGCHGPAASSYSASAEPARVRALVYGHHGD) directs the protein to the mitochondrion. The residue at position 61 (K61) is an N6-acetyllysine; alternate. N6-succinyllysine; alternate is present on K61. Catalysis depends on Y94, which acts as the Proton donor. NADP(+) contacts are provided by residues N167, 193 to 196 (NSGV), and 216 to 218 (RDR). N6-acetyllysine; alternate occurs at positions 252 and 267. Residues K252 and K267 each carry the N6-succinyllysine; alternate modification. NADP(+) contacts are provided by residues 285–288 (YGGM) and 310–312 (FWL). Position 316 is an N6-succinyllysine (K316). K368 lines the NADP(+) pocket.

The protein belongs to the zinc-containing alcohol dehydrogenase family. Quinone oxidoreductase subfamily. Homodimer. Isoform 2 interacts with PPARA in the nucleus and increases its activity. Highly expressed in skeletal and heart muscle. Expressed at lower level in placenta, liver, kidney and pancreas. Weakly or not expressed in lung.

It is found in the mitochondrion. It localises to the cytoplasm. The protein resides in the nucleus. The catalysed reaction is a 2,3-saturated acyl-[ACP] + NADP(+) = a (2E)-enoyl-[ACP] + NADPH + H(+). It carries out the reaction (2E)-butenoyl-[ACP] + NADPH + H(+) = butanoyl-[ACP] + NADP(+). It catalyses the reaction (2E)-hexenoyl-[ACP] + NADPH + H(+) = hexanoyl-[ACP] + NADP(+). The enzyme catalyses (2E)-octenoyl-[ACP] + NADPH + H(+) = octanoyl-[ACP] + NADP(+). The catalysed reaction is (2E)-decenoyl-[ACP] + NADPH + H(+) = decanoyl-[ACP] + NADP(+). It carries out the reaction (2E)-dodecenoyl-[ACP] + NADPH + H(+) = dodecanoyl-[ACP] + NADP(+). It catalyses the reaction (2E)-tetradecenoyl-[ACP] + NADPH + H(+) = tetradecanoyl-[ACP] + NADP(+). The enzyme catalyses (2E)-hexadecenoyl-[ACP] + NADPH + H(+) = hexadecanoyl-[ACP] + NADP(+). In terms of biological role, catalyzes the NADPH-dependent reduction of trans-2-enoyl thioesters in mitochondrial fatty acid synthesis (fatty acid synthesis type II). Fatty acid chain elongation in mitochondria uses acyl carrier protein (ACP) as an acyl group carrier, but the enzyme accepts both ACP and CoA thioesters as substrates in vitro. Displays a preference for medium-chain over short- and long-chain substrates. May provide the octanoyl chain used for lipoic acid biosynthesis, regulating protein lipoylation and mitochondrial respiratory activity particularly in Purkinje cells. Involved in iron homeostasis; affecting Fe-S cluster assembly and ceramide metabolism. Required for proper morphology and bioenergetic functions of mitochondria. Required for maintenance of neurons. The sequence is that of Enoyl-[acyl-carrier-protein] reductase, mitochondrial (MECR) from Homo sapiens (Human).